Reading from the N-terminus, the 147-residue chain is Hemoglobin subunit beta (147 aa).

Residues Leu-3–His-147 enclose the Globin domain. Thr-13 carries the post-translational modification Phosphothreonine. Ser-45 carries the post-translational modification Phosphoserine. Lys-60 carries the post-translational modification N6-acetyllysine. His-64 serves as a coordination point for heme b. Lys-83 bears the N6-acetyllysine mark. Residue His-93 participates in heme b binding. An S-nitrosocysteine modification is found at Cys-94. At Lys-145 the chain carries N6-acetyllysine.

It belongs to the globin family. As to quaternary structure, heterotetramer of two alpha chains and two beta chains. Red blood cells.

In terms of biological role, involved in oxygen transport from the lung to the various peripheral tissues. The polypeptide is Hemoglobin subunit beta (HBB) (Eulemur fulvus fulvus (Brown lemur)).